The sequence spans 315 residues: 4-hydroxy-3-methylbut-2-enyl diphosphate reductase (315 aa).

Cysteine 12 is a [4Fe-4S] cluster binding site. (2E)-4-hydroxy-3-methylbut-2-enyl diphosphate contacts are provided by histidine 41 and histidine 74. Dimethylallyl diphosphate contacts are provided by histidine 41 and histidine 74. The isopentenyl diphosphate site is built by histidine 41 and histidine 74. Cysteine 96 provides a ligand contact to [4Fe-4S] cluster. Position 124 (histidine 124) interacts with (2E)-4-hydroxy-3-methylbut-2-enyl diphosphate. A dimethylallyl diphosphate-binding site is contributed by histidine 124. Histidine 124 is an isopentenyl diphosphate binding site. Glutamate 126 functions as the Proton donor in the catalytic mechanism. Residue threonine 167 coordinates (2E)-4-hydroxy-3-methylbut-2-enyl diphosphate. Residue cysteine 197 participates in [4Fe-4S] cluster binding. 4 residues coordinate (2E)-4-hydroxy-3-methylbut-2-enyl diphosphate: serine 225, serine 226, asparagine 227, and serine 269. Serine 225, serine 226, asparagine 227, and serine 269 together coordinate dimethylallyl diphosphate. Isopentenyl diphosphate contacts are provided by serine 225, serine 226, asparagine 227, and serine 269.

Belongs to the IspH family. In terms of assembly, homodimer. Requires [4Fe-4S] cluster as cofactor.

The catalysed reaction is isopentenyl diphosphate + 2 oxidized [2Fe-2S]-[ferredoxin] + H2O = (2E)-4-hydroxy-3-methylbut-2-enyl diphosphate + 2 reduced [2Fe-2S]-[ferredoxin] + 2 H(+). It carries out the reaction dimethylallyl diphosphate + 2 oxidized [2Fe-2S]-[ferredoxin] + H2O = (2E)-4-hydroxy-3-methylbut-2-enyl diphosphate + 2 reduced [2Fe-2S]-[ferredoxin] + 2 H(+). The protein operates within isoprenoid biosynthesis; dimethylallyl diphosphate biosynthesis; dimethylallyl diphosphate from (2E)-4-hydroxy-3-methylbutenyl diphosphate: step 1/1. Its pathway is isoprenoid biosynthesis; isopentenyl diphosphate biosynthesis via DXP pathway; isopentenyl diphosphate from 1-deoxy-D-xylulose 5-phosphate: step 6/6. Functionally, catalyzes the conversion of 1-hydroxy-2-methyl-2-(E)-butenyl 4-diphosphate (HMBPP) into a mixture of isopentenyl diphosphate (IPP) and dimethylallyl diphosphate (DMAPP). Acts in the terminal step of the DOXP/MEP pathway for isoprenoid precursor biosynthesis. The sequence is that of 4-hydroxy-3-methylbut-2-enyl diphosphate reductase from Wigglesworthia glossinidia brevipalpis.